The chain runs to 241 residues: Triosephosphate isomerase (241 aa).

Residue 9–11 (NWK) coordinates substrate. Residue H96 is the Electrophile of the active site. E165 functions as the Proton acceptor in the catalytic mechanism. Substrate-binding positions include G171, S204, and 225–226 (GG).

Belongs to the triosephosphate isomerase family. As to quaternary structure, homodimer.

Its subcellular location is the cytoplasm. It catalyses the reaction D-glyceraldehyde 3-phosphate = dihydroxyacetone phosphate. The protein operates within carbohydrate biosynthesis; gluconeogenesis. Its pathway is carbohydrate degradation; glycolysis; D-glyceraldehyde 3-phosphate from glycerone phosphate: step 1/1. Its function is as follows. Involved in the gluconeogenesis. Catalyzes stereospecifically the conversion of dihydroxyacetone phosphate (DHAP) to D-glyceraldehyde-3-phosphate (G3P). This chain is Triosephosphate isomerase, found in Gloeothece citriformis (strain PCC 7424) (Cyanothece sp. (strain PCC 7424)).